A 526-amino-acid polypeptide reads, in one-letter code: Peptide chain release factor 3 (526 aa).

One can recognise a tr-type G domain in the interval 9 to 277; it reads DKRRTFAIIS…GIVEWAPVPQ (269 aa). Residues 18–25, 86–90, and 140–143 each bind GTP; these read SHPDAGKT, DTPGH, and NKLD.

Belongs to the TRAFAC class translation factor GTPase superfamily. Classic translation factor GTPase family. PrfC subfamily.

The protein resides in the cytoplasm. In terms of biological role, increases the formation of ribosomal termination complexes and stimulates activities of RF-1 and RF-2. It binds guanine nucleotides and has strong preference for UGA stop codons. It may interact directly with the ribosome. The stimulation of RF-1 and RF-2 is significantly reduced by GTP and GDP, but not by GMP. This Shewanella pealeana (strain ATCC 700345 / ANG-SQ1) protein is Peptide chain release factor 3.